A 361-amino-acid chain; its full sequence is UDP-3-O-acylglucosamine N-acyltransferase (361 aa).

His253 serves as the catalytic Proton acceptor.

The protein belongs to the transferase hexapeptide repeat family. LpxD subfamily. As to quaternary structure, homotrimer.

It carries out the reaction a UDP-3-O-[(3R)-3-hydroxyacyl]-alpha-D-glucosamine + a (3R)-hydroxyacyl-[ACP] = a UDP-2-N,3-O-bis[(3R)-3-hydroxyacyl]-alpha-D-glucosamine + holo-[ACP] + H(+). Its pathway is bacterial outer membrane biogenesis; LPS lipid A biosynthesis. Catalyzes the N-acylation of UDP-3-O-acylglucosamine using 3-hydroxyacyl-ACP as the acyl donor. Is involved in the biosynthesis of lipid A, a phosphorylated glycolipid that anchors the lipopolysaccharide to the outer membrane of the cell. The protein is UDP-3-O-acylglucosamine N-acyltransferase of Burkholderia pseudomallei (strain 1710b).